Here is a 131-residue protein sequence, read N- to C-terminus: D-ribose pyranase (131 aa).

Histidine 20 functions as the Proton donor in the catalytic mechanism. Substrate contacts are provided by residues aspartate 28, histidine 98, and 120–122 (YAN).

This sequence belongs to the RbsD / FucU family. RbsD subfamily. In terms of assembly, homodecamer.

Its subcellular location is the cytoplasm. The enzyme catalyses beta-D-ribopyranose = beta-D-ribofuranose. Its pathway is carbohydrate metabolism; D-ribose degradation; D-ribose 5-phosphate from beta-D-ribopyranose: step 1/2. Functionally, catalyzes the interconversion of beta-pyran and beta-furan forms of D-ribose. The protein is D-ribose pyranase of Bacillus thuringiensis (strain Al Hakam).